The sequence spans 232 residues: MTEPAQKKQKQTVQERKAFISRITNETKIQIAISLNGGYIQIKDSILPAKKDDDVASQATQSQVIDIHTGVGFLDHMIHALAKHSGWSLIVECIGDLHIDDHHTTEDCGIALGQAFKEAMGAVRGVKRFGTGFAPLDEALSRAVVDLSNRPFAVIDLGLKREMIGDLSTEMIPHFLESFAEAARITLHVDCLRGFNDHHRSESAFKALAVAIREAISSNGTNDVPSTKGVLM.

Belongs to the imidazoleglycerol-phosphate dehydratase family.

It carries out the reaction D-erythro-1-(imidazol-4-yl)glycerol 3-phosphate = 3-(imidazol-4-yl)-2-oxopropyl phosphate + H2O. The protein operates within amino-acid biosynthesis; L-histidine biosynthesis; L-histidine from 5-phospho-alpha-D-ribose 1-diphosphate: step 6/9. The protein is Imidazoleglycerol-phosphate dehydratase (HIS3) of Lachancea kluyveri (strain ATCC 58438 / CBS 3082 / BCRC 21498 / NBRC 1685 / JCM 7257 / NCYC 543 / NRRL Y-12651) (Yeast).